We begin with the raw amino-acid sequence, 597 residues long: DNA polymerase III subunit gamma/tau (597 aa).

44-51 contributes to the ATP binding site; it reads GERGTGKT. 4 residues coordinate Zn(2+): Cys-63, Cys-72, Cys-75, and Cys-78.

Belongs to the DnaX/STICHEL family. In terms of assembly, DNA polymerase III contains a core (composed of alpha, epsilon and theta chains) that associates with a tau subunit. This core dimerizes to form the POLIII' complex. PolIII' associates with the gamma complex (composed of gamma, delta, delta', psi and chi chains) and with the beta chain to form the complete DNA polymerase III complex.

The catalysed reaction is DNA(n) + a 2'-deoxyribonucleoside 5'-triphosphate = DNA(n+1) + diphosphate. In terms of biological role, DNA polymerase III is a complex, multichain enzyme responsible for most of the replicative synthesis in bacteria. This DNA polymerase also exhibits 3' to 5' exonuclease activity. This Mycoplasma genitalium (strain ATCC 33530 / DSM 19775 / NCTC 10195 / G37) (Mycoplasmoides genitalium) protein is DNA polymerase III subunit gamma/tau (dnaX).